The chain runs to 597 residues: Probable tyrosine-protein phosphatase (597 aa).

Residues 55-81 (VSSSSDAAPTSISTTTTSTTSMTDASA) show a composition bias toward low complexity. Disordered regions lie at residues 55–89 (VSSS…QQVY), 107–172 (SFSI…PNSL), and 188–228 (STNG…GNNN). Polar residues predominate over residues 107 to 126 (SFSIQPNQTPTMLPTSSYTL). The segment covering 136–151 (TSSISSISSTSSNSTS) has biased composition (low complexity). Polar residues-rich tracts occupy residues 188–206 (STNG…NQPR) and 216–228 (KKST…GNNN). Residues 428 to 579 (GPKNVLNNLI…LMEFGDKLNN (152 aa)) enclose the Tyrosine-protein phosphatase domain. Cys-516 acts as the Phosphocysteine intermediate in catalysis.

Belongs to the protein-tyrosine phosphatase family. Non-receptor class dual specificity subfamily.

The enzyme catalyses O-phospho-L-tyrosyl-[protein] + H2O = L-tyrosyl-[protein] + phosphate. The sequence is that of Probable tyrosine-protein phosphatase (CPP1) from Candida albicans (strain WO-1) (Yeast).